The following is a 152-amino-acid chain: Ribosome maturation factor RimP (152 aa).

It belongs to the RimP family.

The protein resides in the cytoplasm. Its function is as follows. Required for maturation of 30S ribosomal subunits. In Porphyromonas gingivalis (strain ATCC 33277 / DSM 20709 / CIP 103683 / JCM 12257 / NCTC 11834 / 2561), this protein is Ribosome maturation factor RimP.